We begin with the raw amino-acid sequence, 123 residues long: Large ribosomal subunit protein uL14 (123 aa).

Belongs to the universal ribosomal protein uL14 family. In terms of assembly, part of the 50S ribosomal subunit. Forms a cluster with proteins L3 and L19. In the 70S ribosome, L14 and L19 interact and together make contacts with the 16S rRNA in bridges B5 and B8.

Binds to 23S rRNA. Forms part of two intersubunit bridges in the 70S ribosome. This is Large ribosomal subunit protein uL14 from Photorhabdus laumondii subsp. laumondii (strain DSM 15139 / CIP 105565 / TT01) (Photorhabdus luminescens subsp. laumondii).